A 321-amino-acid chain; its full sequence is Acyl-CoA 5-desaturase AL21 (321 aa).

The next 2 membrane-spanning stretches (helical) occupy residues 42 to 62 (IFHI…PFTF) and 64 to 84 (WSAF…GTTL). The Fe cation site is built by His87, His92, His124, His127, and His128. A Histidine box-1 motif is present at residues 87–92 (HRNLTH). The short motif at 124-128 (HRYHH) is the Histidine box-2 element. A helical transmembrane segment spans residues 190 to 210 (LQAALLYMFGGFPFIVWGMAV). 4 residues coordinate Fe cation: His227, His256, His259, and His260. The Histidine box-3 signature appears at 256–260 (HNNHH).

This sequence belongs to the fatty acid desaturase type 1 family. Fe(2+) serves as cofactor.

It is found in the membrane. It catalyses the reaction (11Z,14Z)-eicosadienoyl-CoA + AH2 + O2 = (5Z,11Z,14Z)-eicosatrienoyl-CoA + A + 2 H2O. The enzyme catalyses (11Z,14Z,17Z)-eicosatrienoyl-CoA + AH2 + O2 = (5Z,11Z,14Z,17Z)-eicosatetraenoyl-CoA + A + 2 H2O. It functions in the pathway lipid metabolism; polyunsaturated fatty acid biosynthesis. Catalyzes the desaturation of 20:2Delta(11,14) and 20:3Delta(11,14,17) to generate sciadonic acid (20:3Delta(5,11,14)) and juniperonic acid (20:4Delta(5,11,14,17)). The enzyme can also use 16:0 and 18:0 as substrates. The protein is Acyl-CoA 5-desaturase AL21 of Anemone leveillei (Windflower).